Consider the following 184-residue polypeptide: 20.9 kDa protein (184 aa).

This is 20.9 kDa protein from Zymomonas mobilis subsp. mobilis (strain ATCC 10988 / DSM 424 / LMG 404 / NCIMB 8938 / NRRL B-806 / ZM1).